A 432-amino-acid polypeptide reads, in one-letter code: D-amino acid dehydrogenase (432 aa).

Residue 3–17 coordinates FAD; sequence VVVLGSGVVGVTSAW.

This sequence belongs to the DadA oxidoreductase family. FAD is required as a cofactor.

The catalysed reaction is a D-alpha-amino acid + A + H2O = a 2-oxocarboxylate + AH2 + NH4(+). Its pathway is amino-acid degradation; D-alanine degradation; NH(3) and pyruvate from D-alanine: step 1/1. Oxidative deamination of D-amino acids. The sequence is that of D-amino acid dehydrogenase from Enterobacter sp. (strain 638).